We begin with the raw amino-acid sequence, 358 residues long: 3-dehydroquinate synthase (358 aa).

Residues aspartate 70–lysine 75, glycine 104–aspartate 108, threonine 128–threonine 129, lysine 141, lysine 150, and cysteine 168–threonine 171 each bind NAD(+). 3 residues coordinate Zn(2+): glutamate 183, histidine 246, and histidine 263.

Belongs to the sugar phosphate cyclases superfamily. Dehydroquinate synthase family. It depends on Co(2+) as a cofactor. Zn(2+) is required as a cofactor. Requires NAD(+) as cofactor.

The protein localises to the cytoplasm. It carries out the reaction 7-phospho-2-dehydro-3-deoxy-D-arabino-heptonate = 3-dehydroquinate + phosphate. It participates in metabolic intermediate biosynthesis; chorismate biosynthesis; chorismate from D-erythrose 4-phosphate and phosphoenolpyruvate: step 2/7. Catalyzes the conversion of 3-deoxy-D-arabino-heptulosonate 7-phosphate (DAHP) to dehydroquinate (DHQ). This chain is 3-dehydroquinate synthase, found in Shewanella baltica (strain OS195).